Consider the following 335-residue polypeptide: MRN complex-interacting protein (335 aa).

2 disordered regions span residues 75 to 102 (EEAVNGSEEENAGPLQAEAGSQQAPSKP) and 118 to 194 (QELD…ALST). Ser-100 is modified (phosphoserine). Residues 129–142 (TQLSTSAERPSSPA) show a composition bias toward polar residues. The Nuclear localization signal (NLS) motif lies at 145-148 (RKRK). Residues 177 to 194 (STGLFGTEQQGTSPALST) show a composition bias toward polar residues. The necessary for the association with the MRN complex stretch occupies residues 203 to 230 (FPRWKLPSPVTQVNAPSSKWARFLLAPG). Residues 273–335 (RPPQAIHTTT…TTGEDFDDDL (63 aa)) are disordered. Over residues 286–297 (DRPDRKTREQPR) the composition is skewed to basic and acidic residues.

The protein belongs to the MRNIP family. In terms of assembly, associates with the MRE11-RAD50-NBN (MRN) damage-sensing complex; this association is constitutive. Interacts with MRE11. Interacts with NBN. Interacts with RAD50. Post-translationally, phosphorylated; phosphorylation is constitutive and occurs in the absence of any DNA-damaging stimulus. Phosphorylation is necessary for its nuclear retention.

It localises to the nucleus. The protein resides in the nucleoplasm. Its function is as follows. Plays a role in the cellular response to DNA damage and the maintenance of genome stability through its association with the MRN damage-sensing complex. Promotes chromatin loading and activity of the MRN complex to facilitate subsequent ATM-mediated DNA damage response signaling and DNA repair. This is MRN complex-interacting protein from Mus musculus (Mouse).